The primary structure comprises 1018 residues: MVSHFMGSLSVLCFLLLLGFQFVCPQPSTQHRKVPQRMAAEGAPEDDGGGGAPGVWGAWGPWSACSRSCSGGVMEQTRPCLPRSYRLRGGQRPGAPARAFADHVVSAVRTSVPLHRSRDETPALAGTDASRQGPTVLRGSRHPQPQGLEVTGDRRSRTRGTIGPGKYGYGKAPYILPLQTDTAHTPQRLRRQKLSSRHSRSQGASSARHGYSSPAHQVPQHGPLYQSDSGPRSGLQAAEAPIYQLPLTHDQGYPAASSLFHSPETSNNHGVGTHGATQSFSQPARSTAISCIGAYRQYKLCNTNVCPESSRSIREVQCASYNNKPFMGRFYEWEPFAEVKGNRKCELNCQAMGYRFYVRQAEKVIDGTPCDQNGTAICVSGQCKSIGCDDYLGSDKVVDKCGVCGGDNTGCQVVSGVFKHALTSLGYHRVVEIPEGATKINITEMYKSNNYLALRSRSGRSIINGNWAIDRPGKYEGGGTMFTYKRPNEISSTAGESFLAEGPTNEILDVYMIHQQPNPGVHYEYVIMGTNAISPQVPPHRRPGEPFNGQMVTEGRSQEEGEQKGRNEEKEDLRGEAPEMFTSESAQTFPVRHPDRFSPHRPDNLVPPAPQPPRRSRDHNWKQLGTTECSTTCGKGSQYPIFRCVHRSTHEEAPESYCDSSMKPTPEEEPCNIFPCPAFWDIGEWSECSKTCGLGMQHRQVLCRQVYANRSLTVQPYRCQHLEKPETTSTCQLKICSEWQIRTDWTSCSVPCGVGQRTRDVKCVSNIGDVVDDEECNMKLRPNDIENCDMGPCAKSWFLTEWSERCSAECGAGVRTRSVVCMTNHVSSLPLEGCGNNRPAEATPCDNGPCTGKVEWFAGSWSQCSIECGSGTQQREVICVRKNADTFEVLDPSECSFLEKPPSQQSCHLKPCGAKWFSTEWSMCSKSCQGGFRVREVRCLSDDMTLSNLCDPQLKPEERESCNPQDCVPEVDENCKDKYYNCNVVVQARLCVYNYYKTACCASCTRVANRQTGFLGSR.

The signal sequence occupies residues 1-25 (MVSHFMGSLSVLCFLLLLGFQFVCP). A TSP type-1 1 domain is found at 53 to 307 (PGVWGAWGPW…YKLCNTNVCP (255 aa)). Disordered regions lie at residues 111 to 235 (SVPL…RSGL), 254 to 279 (PAAS…ATQS), and 534 to 623 (SPQV…NWKQ). A compositionally biased stretch (basic residues) spans 187 to 200 (QRLRRQKLSSRHSR). A compositionally biased stretch (low complexity) spans 201–210 (SQGASSARHG). Residues 259-279 (LFHSPETSNNHGVGTHGATQS) are compositionally biased toward polar residues. 2 stretches are compositionally biased toward basic and acidic residues: residues 556 to 577 (RSQE…RGEA) and 592 to 603 (RHPDRFSPHRPD). TSP type-1 domains lie at 676–737 (CPAF…KICS), 739–792 (WQIR…DMGP), 793–851 (CAKS…GPCT), 852–911 (GKVE…HLKP), and 912–968 (CGAK…QDCV). The PLAC domain occupies 971–1008 (VDENCKDKYYNCNVVVQARLCVYNYYKTACCASCTRVA).

Interacts with FBN1. May interact with TGFB1.

It is found in the secreted. The protein localises to the extracellular space. It localises to the extracellular matrix. Functionally, promotes FBN1 matrix assembly. Attenuates TGFB signaling, possibly by accelerating the sequestration of large latent complexes of TGFB or active TGFB by FBN1 microfibril assembly, thereby negatively regulating the expression of TGFB regulatory targets, such as POSTN. The protein is Thrombospondin type-1 domain-containing protein 4 (THSD4) of Homo sapiens (Human).